Consider the following 478-residue polypeptide: ATP-dependent RNA helicase DDX19A (478 aa).

Alanine 2 is modified (N-acetylalanine). An N-terminal lobe region spans residues alanine 2–glutamate 299. A Glycyl lysine isopeptide (Lys-Gly) (interchain with G-Cter in SUMO1); alternate cross-link involves residue lysine 26. Lysine 26 participates in a covalent cross-link: Glycyl lysine isopeptide (Lys-Gly) (interchain with G-Cter in SUMO2); alternate. The disordered stretch occupies residues lysine 31 to arginine 55. The tract at residues aspartate 54–serine 67 is N-terminal helix. The Q motif motif lies at lysine 91–glutamate 119. ATP-binding positions include glutamine 118 and serine 137–threonine 144. The Helicase ATP-binding domain occupies methionine 124–isoleucine 294. The short motif at aspartate 241–aspartate 244 is the DEAD box element. The C-terminal lobe stretch occupies residues glutamate 300 to asparagine 478. Positions threonine 305 to isoleucine 473 constitute a Helicase C-terminal domain. The ATP site is built by arginine 428 and arginine 431.

This sequence belongs to the DEAD box helicase family. DDX19/DBP5 subfamily.

The protein resides in the cytoplasm. Its subcellular location is the nucleus. The protein localises to the nucleoplasm. It carries out the reaction ATP + H2O = ADP + phosphate + H(+). Functionally, ATP-dependent RNA helicase involved in mRNA export from the nucleus. Rather than unwinding RNA duplexes, DDX19 functions as a remodeler of ribonucleoprotein particles, whereby proteins bound to nuclear mRNA are dissociated and replaced by cytoplasmic mRNA binding proteins. In Bos taurus (Bovine), this protein is ATP-dependent RNA helicase DDX19A (DDX19A).